The chain runs to 335 residues: tRNA N6-adenosine threonylcarbamoyltransferase (335 aa).

A divalent metal cation is bound by residues histidine 109, histidine 113, and tyrosine 130. Substrate-binding positions include 130-134, aspartate 162, glycine 177, glutamate 181, and asparagine 266; that span reads YVSGG. A divalent metal cation is bound at residue aspartate 294.

It belongs to the KAE1 / TsaD family. As to quaternary structure, component of the EKC/KEOPS complex composed of at least GON7, TP53RK, TPRKB, OSGEP and LAGE3; the whole complex dimerizes. Interacts with PRAME. A divalent metal cation serves as cofactor. Widely expressed at low level. Expressed in heart, placenta, liver, kidney, lung, brain, skeletal muscle and pancreas.

Its subcellular location is the cytoplasm. The protein resides in the nucleus. It catalyses the reaction L-threonylcarbamoyladenylate + adenosine(37) in tRNA = N(6)-L-threonylcarbamoyladenosine(37) in tRNA + AMP + H(+). Functionally, component of the EKC/KEOPS complex that is required for the formation of a threonylcarbamoyl group on adenosine at position 37 (t(6)A37) in tRNAs that read codons beginning with adenine. The complex is probably involved in the transfer of the threonylcarbamoyl moiety of threonylcarbamoyl-AMP (TC-AMP) to the N6 group of A37. OSGEP likely plays a direct catalytic role in this reaction, but requires other protein(s) of the complex to fulfill this activity. In Homo sapiens (Human), this protein is tRNA N6-adenosine threonylcarbamoyltransferase.